Consider the following 125-residue polypeptide: Large ribosomal subunit protein bL12 (125 aa).

This sequence belongs to the bacterial ribosomal protein bL12 family. As to quaternary structure, homodimer. Part of the ribosomal stalk of the 50S ribosomal subunit. Forms a multimeric L10(L12)X complex, where L10 forms an elongated spine to which 2 to 4 L12 dimers bind in a sequential fashion. Binds GTP-bound translation factors.

Functionally, forms part of the ribosomal stalk which helps the ribosome interact with GTP-bound translation factors. Is thus essential for accurate translation. This chain is Large ribosomal subunit protein bL12, found in Cereibacter sphaeroides (strain ATCC 17023 / DSM 158 / JCM 6121 / CCUG 31486 / LMG 2827 / NBRC 12203 / NCIMB 8253 / ATH 2.4.1.) (Rhodobacter sphaeroides).